The sequence spans 1689 residues: Cullin-7 (1689 aa).

A CPH domain is found at 349 to 422 (RASFASFNTY…HWHMLEILGF (74 aa)). Residues 793–972 (PIQIPFFDVF…HTRLFYMVRA (180 aa)) form the DOC domain. Positions 1321-1337 (VAHEDSGREDKSKKEEA) are enriched in basic and acidic residues. The interval 1321 to 1371 (VAHEDSGREDKSKKEEAIGEAAAVAMAEEEDQGKKEEGEEEGEGEDEEEER) is disordered. Acidic residues predominate over residues 1358-1370 (GEEEGEGEDEEEE). Lysine 1567 is covalently cross-linked (Glycyl lysine isopeptide (Lys-Gly) (interchain with G-Cter in NEDD8)).

It belongs to the cullin family. As to quaternary structure, component of the 3M complex, composed of core components CUL7, CCDC8 and OBSL1. Component of the Cul7-RING(FBXW8) complex consisting of CUL7, RBX1, SKP1 and FBXW8. Within the Cul7-RING(FBXW8) complex interacts with FBXW8 and RBX1, but not with SKP1. Interacts with CUL1 (via the C-terminal domain); the interaction seems to be mediated by FBXW8; it is likely specific to FBXW8, but not other F-box proteins. Interacts (via the CPH domain) with p53/TP53; the interaction preferentially involves tetrameric and dimeric p53/TP53; this interaction recruits p53/TP53 for ubiquitination by neddylated CUL1-RBX1. The CUL7-CUL9 heterodimer seems to interact specifically with p53/TP53. Interacts with FBXW8; interaction is mutually exclusive of binding to CUL9 or p53/TP53. Interacts with CUL9; leading to inhibited CUL9 activity. Interacts with OBSL1. Interacts (as part of the 3M complex) with HDAC4 and HDAC5; it is negatively regulated by ANKRA2.

The protein resides in the cytoplasm. It is found in the cytoskeleton. The protein localises to the microtubule organizing center. It localises to the centrosome. Its subcellular location is the perinuclear region. The protein resides in the golgi apparatus. The protein operates within protein modification; protein ubiquitination. Core component of the 3M and Cul7-RING(FBXW8) complexes, which mediate the ubiquitination and subsequent proteasomal degradation of target proteins. Core component of the 3M complex, a complex required to regulate microtubule dynamics and genome integrity. It is unclear how the 3M complex regulates microtubules, it could act by controlling the level of a microtubule stabilizer. The Cul7-RING(FBXW8) complex alone lacks ubiquitination activity and does not promote polyubiquitination and proteasomal degradation of p53/TP53. However it mediates recruitment of p53/TP53 for ubiquitination by neddylated CUL1-RBX1. Interaction with CUL9 is required to inhibit CUL9 activity and ubiquitination of BIRC5. The Cul7-RING(FBXW8) complex also mediates ubiquitination and consequent degradation of target proteins such as GORASP1, IRS1 and MAP4K1/HPK1. Ubiquitination of GORASP1 regulates Golgi morphogenesis and dendrite patterning in brain. Mediates ubiquitination and degradation of IRS1 in a mTOR-dependent manner: the Cul7-RING(FBXW8) complex recognizes and binds IRS1 previously phosphorylated by S6 kinase (RPS6KB1 or RPS6KB2). The Cul7-RING(FBXW8) complex also mediates ubiquitination of MAP4K1/HPK1: recognizes and binds autophosphorylated MAP4K1/HPK1, leading to its degradation, thereby affecting cell proliferation and differentiation. Acts as a regulator in trophoblast cell epithelial-mesenchymal transition and placental development. While the Cul7-RING(FBXW8) and the 3M complexes are associated and involved in common processes, CUL7 and the Cul7-RING(FBXW8) complex may have additional functions. Probably plays a role in the degradation of proteins involved in endothelial proliferation and/or differentiation. This chain is Cullin-7 (Cul7), found in Mus musculus (Mouse).